Here is an 87-residue protein sequence, read N- to C-terminus: Glutaredoxin 1 (87 aa).

The 87-residue stretch at 1-87 (MFTVIFGRPG…WAKENLNLFA (87 aa)) folds into the Glutaredoxin domain. A disulfide bridge connects residues Cys11 and Cys14.

This sequence belongs to the glutaredoxin family. In terms of assembly, monomer.

Its function is as follows. The disulfide bond functions as an electron carrier in the glutathione-dependent synthesis of deoxyribonucleotides by the enzyme ribonucleotide reductase. In addition, it is also involved in reducing some disulfides in a coupled system with glutathione reductase. This chain is Glutaredoxin 1 (grxA), found in Salmonella typhi.